The following is a 317-amino-acid chain: uncharacterized protein (317 aa).

Positions 68-78 are enriched in low complexity; it reads DSTNTDISNET. A disordered region spans residues 68 to 87; sequence DSTNTDISNETPILSNNTPI.

This is an uncharacterized protein from Methanocaldococcus jannaschii (strain ATCC 43067 / DSM 2661 / JAL-1 / JCM 10045 / NBRC 100440) (Methanococcus jannaschii).